A 149-amino-acid chain; its full sequence is UPF0178 protein CPF_2548 (149 aa).

The protein belongs to the UPF0178 family.

The polypeptide is UPF0178 protein CPF_2548 (Clostridium perfringens (strain ATCC 13124 / DSM 756 / JCM 1290 / NCIMB 6125 / NCTC 8237 / Type A)).